The sequence spans 145 residues: Conglutin (145 aa).

The signal sequence occupies residues 1–21 (MAKSTILVALLALVLVAHASA). 5 disulfide bridges follow: cysteine 35-cysteine 92, cysteine 47-cysteine 79, cysteine 80-cysteine 128, cysteine 94-cysteine 136, and cysteine 105-cysteine 145.

It belongs to the 2S seed storage albumins family. In terms of tissue distribution, expressed in seeds. Not expressed in roots, pegs (budding ovaries) or leaves.

In Arachis hypogaea (Peanut), this protein is Conglutin.